We begin with the raw amino-acid sequence, 473 residues long: Bifunctional protein GlmU (473 aa).

The tract at residues 1–240 (MAIHPLDVVI…AAQVAGVNSP (240 aa)) is pyrophosphorylase. Residues Lys-25, Gln-83, 88 to 89 (GT), 110 to 112 (SGD), Gly-147, Glu-165, and Asn-238 contribute to the UDP-N-acetyl-alpha-D-glucosamine site. Residue Asp-112 participates in Mg(2+) binding. Asn-238 contributes to the Mg(2+) binding site. The linker stretch occupies residues 241-261 (VQLAELERVYQQRLATTLMEQ). The segment at 262-473 (GVRLADPARL…WARPVKKPGV (212 aa)) is N-acetyltransferase. Residues Arg-348 and Lys-366 each coordinate UDP-N-acetyl-alpha-D-glucosamine. His-378 (proton acceptor) is an active-site residue. Positions 381 and 392 each coordinate UDP-N-acetyl-alpha-D-glucosamine. Residues Ala-395, 401-402 (NY), Ser-420, Gly-438, and Arg-455 contribute to the acetyl-CoA site.

This sequence in the N-terminal section; belongs to the N-acetylglucosamine-1-phosphate uridyltransferase family. The protein in the C-terminal section; belongs to the transferase hexapeptide repeat family. In terms of assembly, homotrimer. Mg(2+) serves as cofactor.

It localises to the cytoplasm. It carries out the reaction alpha-D-glucosamine 1-phosphate + acetyl-CoA = N-acetyl-alpha-D-glucosamine 1-phosphate + CoA + H(+). The catalysed reaction is N-acetyl-alpha-D-glucosamine 1-phosphate + UTP + H(+) = UDP-N-acetyl-alpha-D-glucosamine + diphosphate. Its pathway is nucleotide-sugar biosynthesis; UDP-N-acetyl-alpha-D-glucosamine biosynthesis; N-acetyl-alpha-D-glucosamine 1-phosphate from alpha-D-glucosamine 6-phosphate (route II): step 2/2. It participates in nucleotide-sugar biosynthesis; UDP-N-acetyl-alpha-D-glucosamine biosynthesis; UDP-N-acetyl-alpha-D-glucosamine from N-acetyl-alpha-D-glucosamine 1-phosphate: step 1/1. The protein operates within bacterial outer membrane biogenesis; LPS lipid A biosynthesis. Catalyzes the last two sequential reactions in the de novo biosynthetic pathway for UDP-N-acetylglucosamine (UDP-GlcNAc). The C-terminal domain catalyzes the transfer of acetyl group from acetyl coenzyme A to glucosamine-1-phosphate (GlcN-1-P) to produce N-acetylglucosamine-1-phosphate (GlcNAc-1-P), which is converted into UDP-GlcNAc by the transfer of uridine 5-monophosphate (from uridine 5-triphosphate), a reaction catalyzed by the N-terminal domain. This Polaromonas naphthalenivorans (strain CJ2) protein is Bifunctional protein GlmU.